The primary structure comprises 246 residues: UDP-N-acetyl-D-mannosaminuronic acid transferase (246 aa).

It belongs to the glycosyltransferase 26 family.

The catalysed reaction is UDP-N-acetyl-alpha-D-mannosaminouronate + N-acetyl-alpha-D-glucosaminyl-di-trans,octa-cis-undecaprenyl diphosphate = beta-D-ManNAcA-(1-&gt;4)-alpha-D-GlcNAc-di-trans,octa-cis-undecaprenyl diphosphate + UDP + H(+). The protein operates within bacterial outer membrane biogenesis; enterobacterial common antigen biosynthesis. Catalyzes the synthesis of Und-PP-GlcNAc-ManNAcA (Lipid II), the second lipid-linked intermediate involved in enterobacterial common antigen (ECA) synthesis. The chain is UDP-N-acetyl-D-mannosaminuronic acid transferase from Escherichia coli O7:K1 (strain IAI39 / ExPEC).